A 317-amino-acid polypeptide reads, in one-letter code: Apolipoprotein E (317 aa).

A signal peptide spans 1 to 18; the sequence is MKVLWAALLVTFLAGCQA. 8 consecutive repeat copies span residues 80 to 101, 102 to 123, 124 to 145, 146 to 167, 168 to 189, 190 to 211, 212 to 233, and 234 to 255. The 8 X 22 AA approximate tandem repeats stretch occupies residues 80–255; it reads TLMDETMKEL…RLDEVKEQVA (176 aa). M143 is subject to Methionine sulfoxide. At S147 the chain carries Phosphoserine. Residues 158–168 are LDL and other lipoprotein receptors binding; sequence HLRKLRKRLLR. A heparin-binding site is contributed by 162-165; sequence LRKR. A lipid-binding and lipoprotein association region spans residues 210–290; it reads AATVGSLASQ…SWFEPLVEDM (81 aa). 229–236 is a heparin binding site; that stretch reads GERLRARM. Positions 266–317 are homooligomerization; that stretch reads QQISLQAEAFQARLKSWFEPLVEDMQRQWAGLVEKVQAAVGASTAPVPSDNH. Positions 278 to 290 are specificity for association with VLDL; it reads RLKSWFEPLVEDM.

It belongs to the apolipoprotein A1/A4/E family. Homotetramer. May interact with ABCA1; functionally associated with ABCA1 in the biogenesis of HDLs. May interact with APP/A4 amyloid-beta peptide; the interaction is extremely stable in vitro but its physiological significance is unclear. May interact with MAPT. May interact with MAP2. In the cerebrospinal fluid, interacts with secreted SORL1. Interacts with PMEL; this allows the loading of PMEL luminal fragment on ILVs to induce fibril nucleation. APOE exists as multiple glycosylated and sialylated glycoforms within cells and in plasma. The extent of glycosylation and sialylation are tissue and context specific. In terms of processing, glycated in plasma VLDL. Post-translationally, phosphorylated by FAM20C in the extracellular medium.

The protein resides in the secreted. The protein localises to the extracellular space. It is found in the extracellular matrix. It localises to the extracellular vesicle. Its subcellular location is the endosome. The protein resides in the multivesicular body. In terms of biological role, APOE is an apolipoprotein, a protein associating with lipid particles, that mainly functions in lipoprotein-mediated lipid transport between organs via the plasma and interstitial fluids. APOE is a core component of plasma lipoproteins and is involved in their production, conversion and clearance. Apolipoproteins are amphipathic molecules that interact both with lipids of the lipoprotein particle core and the aqueous environment of the plasma. As such, APOE associates with chylomicrons, chylomicron remnants, very low density lipoproteins (VLDL) and intermediate density lipoproteins (IDL) but shows a preferential binding to high-density lipoproteins (HDL). It also binds a wide range of cellular receptors including the LDL receptor/LDLR, the LDL receptor-related proteins LRP1, LRP2 and LRP8 and the very low-density lipoprotein receptor/VLDLR that mediate the cellular uptake of the APOE-containing lipoprotein particles. Finally, APOE also has a heparin-binding activity and binds heparan-sulfate proteoglycans on the surface of cells, a property that supports the capture and the receptor-mediated uptake of APOE-containing lipoproteins by cells. A main function of APOE is to mediate lipoprotein clearance through the uptake of chylomicrons, VLDLs, and HDLs by hepatocytes. APOE is also involved in the biosynthesis by the liver of VLDLs as well as their uptake by peripheral tissues ensuring the delivery of triglycerides and energy storage in muscle, heart and adipose tissues. By participating in the lipoprotein-mediated distribution of lipids among tissues, APOE plays a critical role in plasma and tissues lipid homeostasis. APOE is also involved in two steps of reverse cholesterol transport, the HDLs-mediated transport of cholesterol from peripheral tissues to the liver, and thereby plays an important role in cholesterol homeostasis. First, it is functionally associated with ABCA1 in the biogenesis of HDLs in tissues. Second, it is enriched in circulating HDLs and mediates their uptake by hepatocytes. APOE also plays an important role in lipid transport in the central nervous system, regulating neuron survival and sprouting. This Theropithecus gelada (Gelada baboon) protein is Apolipoprotein E (APOE).